The following is a 528-amino-acid chain: Proteinaceous RNase P 2 (528 aa).

The span at 1-16 shows a compositional bias: basic and acidic residues; that stretch reads MAASDQHRSRRHDESS. The interval 1-28 is disordered; sequence MAASDQHRSRRHDESSSRPNKKKKVSRN. 4 PPR repeats span residues 29–64, 72–107, 108–142, and 145–179; these read PETN…EVRL, LLYL…GISP, NEAS…GGVS, and RLRT…GIAL. Positions 275–511 constitute a PRORP domain; it reads VSSTGRCLSC…NEESSRTWMC (237 aa). Zn(2+)-binding residues include cysteine 281 and cysteine 284. Residues aspartate 343, aspartate 421, aspartate 422, and aspartate 440 each coordinate Mg(2+). Positions 494 and 511 each coordinate Zn(2+).

The protein belongs to the PPR family. P subfamily. Monomer; forms dimers in crystallo but monomers in solution. The cofactor is Mg(2+).

It localises to the nucleus. It catalyses the reaction Endonucleolytic cleavage of RNA, removing 5'-extranucleotides from tRNA precursor.. Its function is as follows. Endonuclease RNase P responsible for the 5' maturation of tRNA precursors. Preferentially binds precursor tRNAs containing short 5' leaders and 3' trailers. Also involved in the maturation of mRNA and small nucleolar RNA (snoRNA). This Arabidopsis thaliana (Mouse-ear cress) protein is Proteinaceous RNase P 2 (PRORP2).